Consider the following 221-residue polypeptide: Thiamine-phosphate synthase (221 aa).

4-amino-2-methyl-5-(diphosphooxymethyl)pyrimidine-binding positions include 44-48 (QFREK) and N79. Mg(2+)-binding residues include D80 and D99. S117 contributes to the 4-amino-2-methyl-5-(diphosphooxymethyl)pyrimidine binding site. A 2-[(2R,5Z)-2-carboxy-4-methylthiazol-5(2H)-ylidene]ethyl phosphate-binding site is contributed by 143–145 (TRS). Position 146 (K146) interacts with 4-amino-2-methyl-5-(diphosphooxymethyl)pyrimidine. 2-[(2R,5Z)-2-carboxy-4-methylthiazol-5(2H)-ylidene]ethyl phosphate is bound by residues G175 and 195–196 (IS).

This sequence belongs to the thiamine-phosphate synthase family. Mg(2+) serves as cofactor.

The catalysed reaction is 2-[(2R,5Z)-2-carboxy-4-methylthiazol-5(2H)-ylidene]ethyl phosphate + 4-amino-2-methyl-5-(diphosphooxymethyl)pyrimidine + 2 H(+) = thiamine phosphate + CO2 + diphosphate. It carries out the reaction 2-(2-carboxy-4-methylthiazol-5-yl)ethyl phosphate + 4-amino-2-methyl-5-(diphosphooxymethyl)pyrimidine + 2 H(+) = thiamine phosphate + CO2 + diphosphate. The enzyme catalyses 4-methyl-5-(2-phosphooxyethyl)-thiazole + 4-amino-2-methyl-5-(diphosphooxymethyl)pyrimidine + H(+) = thiamine phosphate + diphosphate. Its pathway is cofactor biosynthesis; thiamine diphosphate biosynthesis; thiamine phosphate from 4-amino-2-methyl-5-diphosphomethylpyrimidine and 4-methyl-5-(2-phosphoethyl)-thiazole: step 1/1. Condenses 4-methyl-5-(beta-hydroxyethyl)thiazole monophosphate (THZ-P) and 2-methyl-4-amino-5-hydroxymethyl pyrimidine pyrophosphate (HMP-PP) to form thiamine monophosphate (TMP). This chain is Thiamine-phosphate synthase, found in Geobacillus thermodenitrificans (strain NG80-2).